Consider the following 73-residue polypeptide: Protein SlyX homolog (73 aa).

This sequence belongs to the SlyX family.

The sequence is that of Protein SlyX homolog from Haemophilus influenzae (strain PittEE).